The primary structure comprises 1626 residues: DNA topoisomerase 2-beta (1626 aa).

Position 2 is an N-acetylalanine (Ala-2). An N6-acetyllysine modification is found at Lys-3. Residues Gln-28, Asn-29, Lys-33, and Lys-34 each participate in a glycyl lysine isopeptide (Lys-Gly) (interchain with G-Cter in SUMO2) cross-link. ATP is bound by residues Asn-112, Asn-141, and 169 to 171; that span reads SSN. Residues Lys-177 and Lys-178 each participate in a glycyl lysine isopeptide (Lys-Gly) (interchain with G-Cter in SUMO2) cross-link. Position 182–189 (182–189) interacts with ATP; sequence GRNGYGAK. Glycyl lysine isopeptide (Lys-Gly) (interchain with G-Cter in SUMO2) cross-links involve residues Lys-228 and Lys-299. The interval 363-365 is interaction with DNA; the sequence is KKK. Residues Lys-367 and Lys-373 each participate in a glycyl lysine isopeptide (Lys-Gly) (interchain with G-Cter in SUMO2) cross-link. 397-399 is a binding site for ATP; sequence QTK. Glycyl lysine isopeptide (Lys-Gly) (interchain with G-Cter in SUMO2) cross-links involve residues Lys-437, Lys-439, and Lys-446. The Toprim domain maps to 476–593; it reads CTLILTEGDS…SLLKHGFLEE (118 aa). The Mg(2+) site is built by Glu-482, Asp-562, and Asp-564. Glycyl lysine isopeptide (Lys-Gly) (interchain with G-Cter in SUMO2) cross-links involve residues Lys-600, Lys-605, Lys-635, Lys-643, Lys-646, Lys-676, and Lys-712. A Topo IIA-type catalytic domain is found at 736-1189; sequence IPSLVDGFKP…SPSDLWKEDL (454 aa). The active-site O-(5'-phospho-DNA)-tyrosine intermediate is Tyr-826. Positions 1011-1020 are interaction with DNA; sequence KLQTTLTCNS. Residues 1034–1044 carry the Nuclear export signal motif; the sequence is ETVQDILKEFF. A Glycyl lysine isopeptide (Lys-Gly) (interchain with G-Cter in SUMO2) cross-link involves residue Lys-1092. The tract at residues 1110–1140 is disordered; sequence AWKEAQEKAAEEDETQNQHDDSSSDSGTPSG. Glycyl lysine isopeptide (Lys-Gly) (interchain with G-Cter in SUMO2) cross-links involve residues Lys-1214, Lys-1217, Lys-1226, and Lys-1227. The residue at position 1236 (Ser-1236) is a Phosphoserine. Residues Lys-1250, Lys-1262, and Lys-1271 each participate in a glycyl lysine isopeptide (Lys-Gly) (interchain with G-Cter in SUMO2) cross-link. A disordered region spans residues 1274-1604; that stretch reads FDEEFSGAPV…PSLPRTGRAR (331 aa). Thr-1292 bears the Phosphothreonine mark. Glycyl lysine isopeptide (Lys-Gly) (interchain with G-Cter in SUMO2) cross-links involve residues Lys-1323 and Lys-1327. 2 stretches are compositionally biased toward basic and acidic residues: residues 1334-1344 and 1358-1370; these read PWSDDESKSES and SLLRRAAAERPKY. A phosphoserine mark is found at Ser-1336, Ser-1340, Ser-1342, Ser-1344, and Ser-1358. At Tyr-1370 the chain carries Phosphotyrosine. Residues 1374 to 1392 show a composition bias toward acidic residues; sequence FSEEEDDDADDDDDDNNDL. At Ser-1375 the chain carries Phosphoserine. Residue Lys-1398 forms a Glycyl lysine isopeptide (Lys-Gly) (interchain with G-Cter in SUMO2) linkage. At Ser-1400 the chain carries Phosphoserine. Position 1403 is a phosphothreonine (Thr-1403). At Ser-1413 the chain carries Phosphoserine. Tyr-1421 carries the post-translational modification Phosphotyrosine. Ser-1424 carries the post-translational modification Phosphoserine. Residues 1430–1442 show a composition bias toward basic and acidic residues; that stretch reads ATPEKSLHDKKSQ. Lys-1440 is covalently cross-linked (Glycyl lysine isopeptide (Lys-Gly) (interchain with G-Cter in SUMO2)). Phosphoserine occurs at positions 1441, 1452, and 1454. Residue Lys-1456 forms a Glycyl lysine isopeptide (Lys-Gly) (interchain with G-Cter in SUMO2) linkage. Basic and acidic residues predominate over residues 1456-1466; sequence KSEDDSAKFDS. Residues Ser-1461, Ser-1466, Ser-1473, and Ser-1476 each carry the phosphoserine modification. Lys-1490 participates in a covalent cross-link: Glycyl lysine isopeptide (Lys-Gly) (interchain with G-Cter in SUMO2). The interval 1506–1512 is interaction with PLSCR1; it reads KPKRAPK. 3 positions are modified to phosphoserine: Ser-1522, Ser-1524, and Ser-1526. Positions 1539–1549 are enriched in basic residues; sequence GKGRGAKKRKA. Residues Ser-1550 and Ser-1552 each carry the phosphoserine modification. Residues 1563-1574 show a composition bias toward basic residues; that stretch reads KTSKTTSKKPKK. Thr-1575 carries the phosphothreonine modification. 2 positions are modified to phosphoserine: Ser-1576 and Ser-1581. Phosphothreonine is present on Thr-1592. Ser-1596 carries the phosphoserine modification. Residue Tyr-1609 is modified to Phosphotyrosine. Ser-1613 bears the Phosphoserine mark.

Belongs to the type II topoisomerase family. Homodimer. Interacts with KIAA1210. Interacts with PLSCR1. The cofactor is Mg(2+). Mn(2+) is required as a cofactor. Requires Ca(2+) as cofactor. In terms of processing, (Microbial infection) Deubiquitinated by Epstein-Barr virus BPLF1; leading to stabilized SUMOylated TOP2A trapped in cleavage complexes, which halts the DNA damage response to TOP2A-induced double-strand DNA breaks. SUMOylated. As to expression, expressed in the tonsil, spleen, lymph node, thymus, skin, pancreas, testis, colon, kidney, liver, brain and lung. Also found in breast, colon and lung carcinomas, Hodgkin's disease, large-cell non-Hodgkin's lymphoma, lymphocytic lymphomas and seminomas.

Its subcellular location is the nucleus. The protein localises to the nucleolus. The protein resides in the nucleoplasm. It carries out the reaction ATP-dependent breakage, passage and rejoining of double-stranded DNA.. Its function is as follows. Key decatenating enzyme that alters DNA topology by binding to two double-stranded DNA molecules, generating a double-stranded break in one of the strands, passing the intact strand through the broken strand, and religating the broken strand. Plays a role in B-cell differentiation. This chain is DNA topoisomerase 2-beta (TOP2B), found in Homo sapiens (Human).